The chain runs to 288 residues: Glutamate racemase (288 aa).

Residues 10-11 and 42-43 contribute to the substrate site; these read DS and YG. Cysteine 73 acts as the Proton donor/acceptor in catalysis. 74-75 lines the substrate pocket; the sequence is NT. The active-site Proton donor/acceptor is the cysteine 184. 185–186 serves as a coordination point for substrate; the sequence is TH.

This sequence belongs to the aspartate/glutamate racemases family.

It carries out the reaction L-glutamate = D-glutamate. The protein operates within cell wall biogenesis; peptidoglycan biosynthesis. In terms of biological role, provides the (R)-glutamate required for cell wall biosynthesis. The sequence is that of Glutamate racemase from Corynebacterium kroppenstedtii (strain DSM 44385 / JCM 11950 / CIP 105744 / CCUG 35717).